Reading from the N-terminus, the 194-residue chain is Peroxiredoxin 2 (194 aa).

The region spanning 2–160 (PQLQKPAPAF…TLRLVQAFQY (159 aa)) is the Thioredoxin domain. The Cysteine sulfenic acid (-SOH) intermediate role is filled by Cys-47. Thr-193 carries the post-translational modification Phosphothreonine. At Ser-194 the chain carries Phosphoserine.

This sequence belongs to the peroxiredoxin family. AhpC/Prx1 subfamily. As to quaternary structure, homodimer; disulfide-linked, upon oxidation. 5 homodimers assemble to form a ring-like decamer. Also exists as a monomer. The enzyme can be inactivated by further oxidation of the cysteine sulfenic acid (C(P)-SOH) to sulphinic acid (C(P)-SO2H) instead of its condensation to a disulfide bond. It can be reactivated by forming a transient disulfide bond with sulfiredoxin SRXN1, which reduces the cysteine sulfinic acid in an ATP- and Mg-dependent manner. In terms of processing, conjugated to URM1, a ubiquitin-like protein. Detected in the head and body (at protein level).

Its subcellular location is the cytoplasm. The enzyme catalyses a hydroperoxide + [thioredoxin]-dithiol = an alcohol + [thioredoxin]-disulfide + H2O. In terms of biological role, thiol-specific peroxidase that catalyzes the reduction of hydrogen peroxide and organic hydroperoxides to water and alcohols, respectively. Plays a role in cell protection against oxidative stress by detoxifying peroxides and as sensor of hydrogen peroxide-mediated signaling events. Might participate in the signaling cascades of growth factors and tumor necrosis factor-alpha by regulating the intracellular concentrations of H(2)O(2). Reduces an intramolecular disulfide bond in GDPD5 that gates the ability to GDPD5 to drive postmitotic motor neuron differentiation. This is Peroxiredoxin 2 from Drosophila melanogaster (Fruit fly).